The sequence spans 280 residues: Undecaprenyl-diphosphatase (280 aa).

8 consecutive transmembrane segments (helical) span residues 2–22 (FIIE…TEWL), 45–65 (AFME…VVVI), 86–106 (WQLW…GLFL), 114–134 (FYNL…FIYL), 147–167 (LASL…LALF), 188–208 (SVVT…ASGW), 223–243 (GQIF…LVVI), and 255–275 (FTIF…YAAI).

This sequence belongs to the UppP family.

It localises to the cell membrane. The catalysed reaction is di-trans,octa-cis-undecaprenyl diphosphate + H2O = di-trans,octa-cis-undecaprenyl phosphate + phosphate + H(+). In terms of biological role, catalyzes the dephosphorylation of undecaprenyl diphosphate (UPP). Confers resistance to bacitracin. This is Undecaprenyl-diphosphatase from Streptococcus sanguinis (strain SK36).